The chain runs to 592 residues: MFGRTYYCGDITEKAIGESVTLKGWVQKRRDLGGLIFIDLRDRTGIVQVVFNPDVSKEALAIAEGIRNEYVLDIQGKVVAREEGTVNPNLKTGAIEIHADGVNVLNAAKTPPFAISDQAEEVSEDVRLKHRYLDLRRPAMFQTMQLRHNVTKAVRSFLDENGFLDIETPILTGSTPEGARDYLVPSRVHEGEFYALPQSPQLFKQLLMVSGIERYYQIARCFRDEDLRADRQPEFTQIDIEMSFMSQEDIMSLAEEMMAKVMRETKGEELQLPLPRMTYDEAMNKYGSDKPDTRFDMLLTDVSDIVKDTEFKVFSSAVANGGVVKAINVKGGAGDYSRKDIDALGAFAANYGAKGLAWVKVEADGVKGPIAKFFDEEKQSKLIEALDAAEGDLLLFGADQFEVVAASLGALRLKLGKERGLIDEKLFNFLWVIDWPLLEHDPEEGRFYAAHHPFTMPVREDLELIETAPEDMKAQAYDLVLNGYELGGGSIRIFEKDIQEKMFALLGFSPEEAAEQFGFLLEAFEYGAPPHGGIALGLDRLVMLLAGRTNLRDTIAFPKTASASCLMTEAPGEVSDAQLDELHLSIKKKVKN.

Glu-177 is a binding site for L-aspartate. The interval 201-204 (QLFK) is aspartate. Residue Arg-223 coordinates L-aspartate. ATP contacts are provided by residues 223 to 225 (RDE) and Gln-232. L-aspartate is bound at residue His-451. Position 485 (Glu-485) interacts with ATP. Residue Arg-492 coordinates L-aspartate. 537-540 (GLDR) serves as a coordination point for ATP.

Belongs to the class-II aminoacyl-tRNA synthetase family. Type 1 subfamily. As to quaternary structure, homodimer.

The protein resides in the cytoplasm. The enzyme catalyses tRNA(Asx) + L-aspartate + ATP = L-aspartyl-tRNA(Asx) + AMP + diphosphate. Functionally, aspartyl-tRNA synthetase with relaxed tRNA specificity since it is able to aspartylate not only its cognate tRNA(Asp) but also tRNA(Asn). Reaction proceeds in two steps: L-aspartate is first activated by ATP to form Asp-AMP and then transferred to the acceptor end of tRNA(Asp/Asn). The protein is Aspartate--tRNA(Asp/Asn) ligase of Bacillus subtilis (strain 168).